The chain runs to 195 residues: MRKAEISRKTAETDISVTVDLDGTGRYDIRTGVGFFDHMMDQLARHALIDITLRCEGDLHIDDHHTVEDCGIALGQALTRALGDKRGIRRYGSFHLAMDDALVRAALDLSGRPFLVWNLPFPTEKIGSFDTELVREFFQAFATHGGITLHVDLIHGVNSHHIAEAAFKAVARSLREAVEPDPRRADAIPSTKGML.

It belongs to the imidazoleglycerol-phosphate dehydratase family.

It is found in the cytoplasm. The enzyme catalyses D-erythro-1-(imidazol-4-yl)glycerol 3-phosphate = 3-(imidazol-4-yl)-2-oxopropyl phosphate + H2O. It functions in the pathway amino-acid biosynthesis; L-histidine biosynthesis; L-histidine from 5-phospho-alpha-D-ribose 1-diphosphate: step 6/9. This chain is Imidazoleglycerol-phosphate dehydratase, found in Cereibacter sphaeroides (strain ATCC 17029 / ATH 2.4.9) (Rhodobacter sphaeroides).